Here is a 139-residue protein sequence, read N- to C-terminus: Putative pre-16S rRNA nuclease (139 aa).

Belongs to the YqgF nuclease family.

The protein resides in the cytoplasm. Its function is as follows. Could be a nuclease involved in processing of the 5'-end of pre-16S rRNA. This Bacillus licheniformis (strain ATCC 14580 / DSM 13 / JCM 2505 / CCUG 7422 / NBRC 12200 / NCIMB 9375 / NCTC 10341 / NRRL NRS-1264 / Gibson 46) protein is Putative pre-16S rRNA nuclease.